Here is a 282-residue protein sequence, read N- to C-terminus: 2-dehydro-3-deoxyphosphooctonate aldolase (282 aa).

Belongs to the KdsA family.

It localises to the cytoplasm. It catalyses the reaction D-arabinose 5-phosphate + phosphoenolpyruvate + H2O = 3-deoxy-alpha-D-manno-2-octulosonate-8-phosphate + phosphate. The protein operates within carbohydrate biosynthesis; 3-deoxy-D-manno-octulosonate biosynthesis; 3-deoxy-D-manno-octulosonate from D-ribulose 5-phosphate: step 2/3. It participates in bacterial outer membrane biogenesis; lipopolysaccharide biosynthesis. This chain is 2-dehydro-3-deoxyphosphooctonate aldolase, found in Shewanella sp. (strain ANA-3).